We begin with the raw amino-acid sequence, 587 residues long: MSSVNKDTIHVAERSLHKEHLTEGGNMAFHNHLNDFAHIEDPLERRRLALESIDDEGFGWQQVKTISIAGVGFLTDSYDIFAINLGITMMSYVYWHGSMPGPSQTLLKVSTSVGTVIGQFGFGTLADIVGRKRIYGMELIIMIVCTILQTTVAHSPAINFVAVLTFYRIVMGIGIGGDYPLSSIITSEFATTKWRGAIMGAVFANQAWGQISGGIIALILVAAYKGELEYANSGAECDARCQKACDQMWRILIGLGTVLGLACLYFRLTIPESPRYQLDVNAKLELAAAAQEQDGEKKIHDTSDEDMAINGLERASTAVESLDNHPPKASFKDFCRHFGQWKYGKILLGTAGSWFTLDVAFYGLSLNSAVILQTIGYAGSKNVYKKLYDTAVGNLILICAGSLPGYWVSVFTVDIIGRKPIQLAGFIILTALFCVIGFAYHKLGDHGLLALYVICQFFQNFGPNTTTFIVPGECFPTRYRSTAHGISAASGKVGAIIAQTALGTLIDHNCARDGKPTNCWLPHVMEIFALFMLLGIFTTLLIPETKRKTLEEINELYHDEIDPATLNFRNKNNDIESSSPSQLQHEA.

Topologically, residues 1–67 (MSSVNKDTIH…FGWQQVKTIS (67 aa)) are extracellular. A Glycyl lysine isopeptide (Lys-Gly) (interchain with G-Cter in ubiquitin) cross-link involves residue K6. A helical membrane pass occupies residues 68 to 88 (IAGVGFLTDSYDIFAINLGIT). Over 89–108 (MMSYVYWHGSMPGPSQTLLK) the chain is Cytoplasmic. The helical transmembrane segment at 109–129 (VSTSVGTVIGQFGFGTLADIV) threads the bilayer. At 130 to 133 (GRKR) the chain is on the extracellular side. A helical membrane pass occupies residues 134–154 (IYGMELIIMIVCTILQTTVAH). Residues 155 to 156 (SP) are Cytoplasmic-facing. Residues 157 to 177 (AINFVAVLTFYRIVMGIGIGG) traverse the membrane as a helical segment. Topologically, residues 178–201 (DYPLSSIITSEFATTKWRGAIMGA) are extracellular. A helical transmembrane segment spans residues 202–222 (VFANQAWGQISGGIIALILVA). Over 223–250 (AYKGELEYANSGAECDARCQKACDQMWR) the chain is Cytoplasmic. The helical transmembrane segment at 251–271 (ILIGLGTVLGLACLYFRLTIP) threads the bilayer. Topologically, residues 272-345 (ESPRYQLDVN…RHFGQWKYGK (74 aa)) are extracellular. A Glycyl lysine isopeptide (Lys-Gly) (interchain with G-Cter in ubiquitin) cross-link involves residue K298. A Phosphothreonine modification is found at T302. 2 positions are modified to phosphoserine: S303 and S316. T317 is subject to Phosphothreonine. S321 is modified (phosphoserine). The helical transmembrane segment at 346-366 (ILLGTAGSWFTLDVAFYGLSL) threads the bilayer. The Cytoplasmic portion of the chain corresponds to 367–395 (NSAVILQTIGYAGSKNVYKKLYDTAVGNL). Residues 396 to 416 (ILICAGSLPGYWVSVFTVDII) form a helical membrane-spanning segment. The Extracellular portion of the chain corresponds to 417–419 (GRK). Residues 420–440 (PIQLAGFIILTALFCVIGFAY) traverse the membrane as a helical segment. Residues 441-442 (HK) are Cytoplasmic-facing. The helical transmembrane segment at 443 to 463 (LGDHGLLALYVICQFFQNFGP) threads the bilayer. The Extracellular portion of the chain corresponds to 464–485 (NTTTFIVPGECFPTRYRSTAHG). Residues 486–506 (ISAASGKVGAIIAQTALGTLI) form a helical membrane-spanning segment. Residues 507–522 (DHNCARDGKPTNCWLP) lie on the Cytoplasmic side of the membrane. The chain crosses the membrane as a helical span at residues 523-543 (HVMEIFALFMLLGIFTTLLIP). Residues 544 to 587 (ETKRKTLEEINELYHDEIDPATLNFRNKNNDIESSSPSQLQHEA) lie on the Extracellular side of the membrane. The tract at residues 568–587 (FRNKNNDIESSSPSQLQHEA) is disordered. 3 positions are modified to phosphoserine: S577, S579, and S581.

This sequence belongs to the major facilitator superfamily. Phosphate:H(+) symporter (TC 2.A.1.9) family. As to quaternary structure, may function as a monomer. Phosphorylated; phosphorylation increases after phosphate addition to the growth medium. Post-translationally, ubiquitinated in a phosphate-dependent manner; ubiquitination may influence the trafficking of PHO84 to the cell membrane and serve as a signal for endocytosis and internalization.

The protein resides in the cell membrane. It localises to the vacuole. The catalysed reaction is phosphate(in) + H(+)(in) = phosphate(out) + H(+)(out). The enzyme catalyses Mn(2+)(in) = Mn(2+)(out). It carries out the reaction Zn(2+)(in) = Zn(2+)(out). It catalyses the reaction Cu(2+)(in) = Cu(2+)(out). The catalysed reaction is Co(2+)(in) = Co(2+)(out). Transport activity is inhibited in the presence of the protonophore carbonylcyanide m-chlorophenylhydrazone. Transport activity is inhibited by glycerol-3-phosphate. Transport activity is inhibited by phosphonoacetic acid. Signaling activity is stimulated by glycerol-3-phosphate which acts as a nontransported PHO84 agonist that can trigger PKA signaling. Signaling activity is stimulated by arsenate. Functionally, proton-coupled high-affinity transporter for external inorganic phosphate. Acts as a transceptor, a membrane protein that in addition to its transporter activity also possesses receptor-like signaling activity; mediates activation of the protein kinase A (PKA) pathway targets during growth induction, triggered by phosphate addition to cells growth-arrested due to previous phosphate starvation. Is not an essential protein, since constitutive, low affinity phosphate transporters exist in yeast. Can function as a low affinity metal transporter that transports manganese, zinc, cobalt and copper. Plays a role in manganese homeostasis predominantly under manganese surplus conditions. The protein is Inorganic phosphate transporter PHO84 (PHO84) of Saccharomyces cerevisiae (strain ATCC 204508 / S288c) (Baker's yeast).